Consider the following 418-residue polypeptide: Pestheic acid cluster transcriptional regulator 1 (418 aa).

The tract at residues 244 to 272 (GTAVTTTATTSSSFISKSSEEPSPKRIKP) is disordered. Low complexity predominate over residues 245–260 (TAVTTTATTSSSFISK).

The protein resides in the nucleus. Functionally, transcription factor that, with ptaR2 and ptaR3, coregulates the expression of the gene cluster that mediates the biosynthesis of pestheic acid, a diphenyl ether which is a biosynthetic precursor of the unique chloropupukeananes. The sequence is that of Pestheic acid cluster transcriptional regulator 1 from Pestalotiopsis fici (strain W106-1 / CGMCC3.15140).